We begin with the raw amino-acid sequence, 446 residues long: Keratin, type I cytoskeletal 25 (446 aa).

A disordered region spans residues 1-20 (MSLRLSSGSKRSYARPSTGS). The head stretch occupies residues 1–74 (MSLRLSSGSK…VNEGGLLSGN (74 aa)). The coil 1A stretch occupies residues 75-110 (EKVTMQNLNDRLASYLDNVQALQEANADLEQKIKGW). The region spanning 75–390 (EKVTMQNLND…LLIGGDEGAC (316 aa)) is the IF rod domain. Residues 111–132 (YEKFGPGSCRGLDHDYSRYFPI) form a linker 1 region. A coil 1B region spans residues 133–224 (IDDLKNQIIT…KNHKEEMQAL (92 aa)). Positions 225–247 (QCAAGGNVNVEMNAAPGVDLTVL) are linker 12. Positions 248 to 386 (LNNMRAEYEA…ETYCLLIGGD (139 aa)) are coil 2. Residues 387 to 446 (EGACKSSSYKSKDYTSGNAGNQSKDSPKAIVVKKVLEEVDQRSKILTTRLHSLEEKSQSN) form a tail region. The tract at residues 394 to 413 (SYKSKDYTSGNAGNQSKDSP) is disordered. Positions 400–410 (YTSGNAGNQSK) are enriched in polar residues. Phosphoserine is present on Ser-438.

The protein belongs to the intermediate filament family. Heterodimer of a type I and a type II keratin. Heterodimer with type II keratin KRT5 leading to the formation of keratin intermediate filament (KIF) network. Interacts with KRT6A to form filaments.

The protein localises to the cytoplasm. Its function is as follows. Essential for the proper assembly of type I and type II keratin protein complexes and formation of keratin intermediate filaments in the inner root sheath (irs). Plays a role in the cytoskeleton organization. In Rattus norvegicus (Rat), this protein is Keratin, type I cytoskeletal 25.